We begin with the raw amino-acid sequence, 136 residues long: Small ribosomal subunit protein uS8 (136 aa).

The protein belongs to the universal ribosomal protein uS8 family. As to quaternary structure, part of the 30S ribosomal subunit. Contacts proteins S5 and S12.

Its function is as follows. One of the primary rRNA binding proteins, it binds directly to 16S rRNA central domain where it helps coordinate assembly of the platform of the 30S subunit. This is Small ribosomal subunit protein uS8 from Persephonella marina (strain DSM 14350 / EX-H1).